The following is a 287-amino-acid chain: Large ribosomal subunit protein uL2 (287 aa).

Positions 214 to 287 are disordered; the sequence is LGRRPEVRGS…SKRGRGGRDA (74 aa). A compositionally biased stretch (basic residues) spans 271–287; it reads QRRRRKSSKRGRGGRDA.

It belongs to the universal ribosomal protein uL2 family. As to quaternary structure, part of the 50S ribosomal subunit. Forms a bridge to the 30S subunit in the 70S ribosome.

Its function is as follows. One of the primary rRNA binding proteins. Required for association of the 30S and 50S subunits to form the 70S ribosome, for tRNA binding and peptide bond formation. It has been suggested to have peptidyltransferase activity; this is somewhat controversial. Makes several contacts with the 16S rRNA in the 70S ribosome. The protein is Large ribosomal subunit protein uL2 of Synechococcus elongatus (strain ATCC 33912 / PCC 7942 / FACHB-805) (Anacystis nidulans R2).